We begin with the raw amino-acid sequence, 499 residues long: Aspartyl/glutamyl-tRNA(Asn/Gln) amidotransferase subunit B (499 aa).

The protein belongs to the GatB/GatE family. GatB subfamily. Heterotrimer of A, B and C subunits.

The catalysed reaction is L-glutamyl-tRNA(Gln) + L-glutamine + ATP + H2O = L-glutaminyl-tRNA(Gln) + L-glutamate + ADP + phosphate + H(+). It catalyses the reaction L-aspartyl-tRNA(Asn) + L-glutamine + ATP + H2O = L-asparaginyl-tRNA(Asn) + L-glutamate + ADP + phosphate + 2 H(+). In terms of biological role, allows the formation of correctly charged Asn-tRNA(Asn) or Gln-tRNA(Gln) through the transamidation of misacylated Asp-tRNA(Asn) or Glu-tRNA(Gln) in organisms which lack either or both of asparaginyl-tRNA or glutaminyl-tRNA synthetases. The reaction takes place in the presence of glutamine and ATP through an activated phospho-Asp-tRNA(Asn) or phospho-Glu-tRNA(Gln). This Leifsonia xyli subsp. xyli (strain CTCB07) protein is Aspartyl/glutamyl-tRNA(Asn/Gln) amidotransferase subunit B.